A 93-amino-acid polypeptide reads, in one-letter code: YcgL domain-containing protein VV1058 (93 aa).

A YcgL domain is found at 1-84; sequence MLCSIYKSSK…PPENLLQQHK (84 aa). Positions 74 to 93 are disordered; the sequence is PPPENLLQQHKERKAQQKND.

The chain is YcgL domain-containing protein VV1058 from Vibrio vulnificus (strain YJ016).